A 179-amino-acid polypeptide reads, in one-letter code: Small ribosomal subunit protein uS5 (179 aa).

In terms of domain architecture, S5 DRBM spans 13 to 76; that stretch reads LDERVVLINR…EAAKRNLIRV (64 aa). The interval 160–179 is disordered; it reads DMTPQELNARRMRRETTEAA.

The protein belongs to the universal ribosomal protein uS5 family. Part of the 30S ribosomal subunit. Contacts proteins S4 and S8.

Its function is as follows. With S4 and S12 plays an important role in translational accuracy. Located at the back of the 30S subunit body where it stabilizes the conformation of the head with respect to the body. This chain is Small ribosomal subunit protein uS5, found in Chloroflexus aggregans (strain MD-66 / DSM 9485).